We begin with the raw amino-acid sequence, 60 residues long: Protein CADMIUM TOLERANCE 4 (60 aa).

The helical transmembrane segment at 26–42 threads the bilayer; it reads GFLYACLFMLCCCFCCY.

This sequence belongs to the CYSTM1 family. In terms of tissue distribution, mainly expressed in shoots, and, to a lower extent, in roots.

It is found in the cell membrane. It localises to the secreted. The protein localises to the cell wall. Functionally, confers resistance to heavy metal ions (e.g. aluminium (Al)) by chelating them at the plasma membrane of root cells, thus stopping their entry and reducing their accumulation. In Oryza sativa subsp. japonica (Rice), this protein is Protein CADMIUM TOLERANCE 4.